A 780-amino-acid polypeptide reads, in one-letter code: Reticulon-1 (780 aa).

4 disordered regions span residues 1–76 (MAAP…VAME), 128–176 (QKEN…AEST), 201–223 (RPQE…LDFK), and 293–576 (MTAT…IPGP). S13 and S70 each carry phosphoserine. The residue at position 327 (S327) is a Phosphoserine. The span at 328–341 (PGSVTPPSSGTEPS) shows a compositional bias: low complexity. 3 positions are modified to phosphoserine: S350, S352, and S487. Basic and acidic residues predominate over residues 497–512 (AIREETGSRATEERAP). One can recognise a Reticulon domain in the interval 593–780 (AIDLLYWRDI…KIPGAKRHAE (188 aa)). Transmembrane regions (helical) follow at residues 607 to 627 (IVFG…VVSV) and 709 to 729 (FAVL…LTLL).

As to quaternary structure, interacts with NDRG1. Interacts with BACE1. Interacts with TMEM33.

The protein localises to the endoplasmic reticulum membrane. The protein resides in the golgi apparatus membrane. Its function is as follows. Inhibits amyloid precursor protein processing, probably by blocking BACE1 activity. This Mus musculus (Mouse) protein is Reticulon-1 (Rtn1).